A 382-amino-acid polypeptide reads, in one-letter code: Lipid-A-disaccharide synthase (382 aa).

This sequence belongs to the LpxB family.

It catalyses the reaction a lipid X + a UDP-2-N,3-O-bis[(3R)-3-hydroxyacyl]-alpha-D-glucosamine = a lipid A disaccharide + UDP + H(+). It functions in the pathway bacterial outer membrane biogenesis; LPS lipid A biosynthesis. Condensation of UDP-2,3-diacylglucosamine and 2,3-diacylglucosamine-1-phosphate to form lipid A disaccharide, a precursor of lipid A, a phosphorylated glycolipid that anchors the lipopolysaccharide to the outer membrane of the cell. The chain is Lipid-A-disaccharide synthase from Dechloromonas aromatica (strain RCB).